Here is a 60-residue protein sequence, read N- to C-terminus: Metallothionein (60 aa).

Residues Met1 to Lys28 are beta. A divalent metal cation contacts are provided by Cys3, Cys5, Cys11, Cys13, Cys17, Cys19, Cys22, Cys24, Cys27, Cys31, Cys32, Cys34, Cys35, Cys39, Cys42, Cys46, Cys48, Cys56, Cys58, and Cys59. Positions Lys29 to Asn60 are alpha.

The protein belongs to the metallothionein superfamily. Type 1 family.

Functionally, metallothioneins have a high content of cysteine residues that bind various heavy metals. The polypeptide is Metallothionein (MT-A) (Ambystoma mexicanum (Axolotl)).